We begin with the raw amino-acid sequence, 386 residues long: 3-hydroxyisobutyryl-CoA hydrolase, mitochondrial (386 aa).

A mitochondrion-targeting transit peptide spans Met-1 to Thr-32. N6-acetyllysine; alternate occurs at positions 55 and 92. An N6-succinyllysine; alternate mark is found at Lys-55 and Lys-92. The substrate site is built by Glu-121, Gly-146, Glu-169, and Asp-177. Lys-221 is subject to N6-acetyllysine; alternate. An N6-succinyllysine; alternate modification is found at Lys-221. The residue at position 234 (Ser-234) is a Phosphoserine. Residue Lys-257 is modified to N6-succinyllysine. The residue at position 297 (Lys-297) is an N6-acetyllysine; alternate. The residue at position 297 (Lys-297) is an N6-succinyllysine; alternate. Position 301 is an N6-succinyllysine (Lys-301). Lys-353 carries the N6-acetyllysine; alternate modification. Residue Lys-353 is modified to N6-succinyllysine; alternate. Ser-356 is modified (phosphoserine). 2 positions are modified to N6-acetyllysine: Lys-360 and Lys-365. Lys-377 is subject to N6-succinyllysine.

The protein belongs to the enoyl-CoA hydratase/isomerase family. Highly expressed in liver and kidney, also detected in heart, muscle and brain (at protein level). Not detected in lung.

It localises to the mitochondrion. The catalysed reaction is 3-hydroxy-2-methylpropanoyl-CoA + H2O = 3-hydroxy-2-methylpropanoate + CoA + H(+). Its pathway is amino-acid degradation; L-valine degradation. Its function is as follows. Hydrolyzes 3-hydroxyisobutyryl-CoA (HIBYL-CoA), a saline catabolite. Has high activity toward isobutyryl-CoA. Could be an isobutyryl-CoA dehydrogenase that functions in valine catabolism. Also hydrolyzes 3-hydroxypropanoyl-CoA. The sequence is that of 3-hydroxyisobutyryl-CoA hydrolase, mitochondrial (HIBCH) from Homo sapiens (Human).